The sequence spans 54 residues: Large ribosomal subunit protein bL33A (54 aa).

This sequence belongs to the bacterial ribosomal protein bL33 family.

This is Large ribosomal subunit protein bL33A from Mycolicibacterium gilvum (strain PYR-GCK) (Mycobacterium gilvum (strain PYR-GCK)).